Consider the following 192-residue polypeptide: Der GTPase-activating protein YihI (192 aa).

Residues 1-12 show a composition bias toward basic residues; that stretch reads MSAKQPNRKPAG. Disordered stretches follow at residues 1 to 87 and 145 to 192; these read MSAK…IKEK and DTDD…PKKK. The segment covering 13-26 has biased composition (basic and acidic residues); it reads KRKESDASAQEGRE. The span at 27-36 shows a compositional bias: basic residues; the sequence is RKRAAKRKGL. Over residues 145–172 the composition is skewed to acidic residues; sequence DTDDDEDEADFDEADFDEPGQPASEEEL. Residues 183–192 show a composition bias toward basic and acidic residues; the sequence is PEPKPEPKKK.

Belongs to the YihI family. In terms of assembly, interacts with Der.

In terms of biological role, a GTPase-activating protein (GAP) that modifies Der/EngA GTPase function. May play a role in ribosome biogenesis. This chain is Der GTPase-activating protein YihI, found in Aeromonas hydrophila subsp. hydrophila (strain ATCC 7966 / DSM 30187 / BCRC 13018 / CCUG 14551 / JCM 1027 / KCTC 2358 / NCIMB 9240 / NCTC 8049).